The sequence spans 389 residues: GTPase Obg (389 aa).

In terms of domain architecture, Obg spans 1–159; that stretch reads MKFVDEAVIR…RSLKLELLLL (159 aa). One can recognise an OBG-type G domain in the interval 160–333; sequence ADVGLLGMPN…LALKLLDYIA (174 aa). Residues 166–173, 191–195, 213–216, 283–286, and 314–316 contribute to the GTP site; these read GMPNAGKS, FTTLV, DIPG, NKTD, and SAY. 2 residues coordinate Mg(2+): Ser173 and Thr193.

This sequence belongs to the TRAFAC class OBG-HflX-like GTPase superfamily. OBG GTPase family. Monomer. The cofactor is Mg(2+).

The protein resides in the cytoplasm. In terms of biological role, an essential GTPase which binds GTP, GDP and possibly (p)ppGpp with moderate affinity, with high nucleotide exchange rates and a fairly low GTP hydrolysis rate. Plays a role in control of the cell cycle, stress response, ribosome biogenesis and in those bacteria that undergo differentiation, in morphogenesis control. In Shewanella baltica (strain OS223), this protein is GTPase Obg.